We begin with the raw amino-acid sequence, 209 residues long: Small ribosomal subunit protein uS4 (209 aa).

The 61-residue stretch at 99–159 (SRLDSVCYRM…EKSKAQLRIK (61 aa)) folds into the S4 RNA-binding domain.

The protein belongs to the universal ribosomal protein uS4 family. Part of the 30S ribosomal subunit. Contacts protein S5. The interaction surface between S4 and S5 is involved in control of translational fidelity.

Functionally, one of the primary rRNA binding proteins, it binds directly to 16S rRNA where it nucleates assembly of the body of the 30S subunit. Its function is as follows. With S5 and S12 plays an important role in translational accuracy. The polypeptide is Small ribosomal subunit protein uS4 (Thiobacillus denitrificans (strain ATCC 25259 / T1)).